The chain runs to 669 residues: Beta-galactosidase (669 aa).

An N-terminal signal peptide occupies residues 1–24; the sequence is MDFPGAARLLSLLLVPLLLGPARG. A propeptide spanning residues 25–29 is cleaved from the precursor; it reads LRNAS. Asparagine 27 is a glycosylation site (N-linked (GlcNAc...) asparagine). The substrate site is built by tyrosine 84, glutamate 130, and asparagine 188. The active-site Proton donor is the glutamate 189. An intrachain disulfide couples cysteine 196 to cysteine 231. Residue asparagine 248 is glycosylated (N-linked (GlcNAc...) asparagine). Residue glutamate 269 is the Nucleophile of the active site. Tyrosine 334 lines the substrate pocket. N-linked (GlcNAc...) asparagine glycosylation is found at asparagine 465, asparagine 499, asparagine 547, and asparagine 557. Cysteine 628 and cysteine 636 form a disulfide bridge. Residues 649–669 form a disordered region; the sequence is TPTSSHPLPDLSDRDSGWDRV. Basic and acidic residues predominate over residues 659-669; sequence LSDRDSGWDRV.

This sequence belongs to the glycosyl hydrolase 35 family. Homodimer. May form higher multimers.

It localises to the lysosome. It carries out the reaction Hydrolysis of terminal non-reducing beta-D-galactose residues in beta-D-galactosides.. Functionally, cleaves beta-linked terminal galactosyl residues from gangliosides, glycoproteins, and glycosaminoglycans. The polypeptide is Beta-galactosidase (GLB1) (Felis catus (Cat)).